The chain runs to 503 residues: Secreted RxLR effector protein RXLR-C08 (503 aa).

The signal sequence occupies residues 1–22 (MRLCGVASAFLSTLILIAHIDA). Residues Asn27, Asn35, and Asn45 are each glycosylated (N-linked (GlcNAc...) asparagine). The short motif at 57–60 (DEER) is the dEER element. N-linked (GlcNAc...) asparagine glycosylation is found at Asn108, Asn197, and Asn374.

It belongs to the RxLR effector family.

It localises to the secreted. It is found in the host Golgi apparatus. In terms of biological role, secreted effector that suppresses pattern-triggered immunity (PTI) in plant host. The polypeptide is Secreted RxLR effector protein RXLR-C08 (Plasmopara halstedii (Downy mildew of sunflower)).